The sequence spans 262 residues: UPF0758 protein R01728 (262 aa).

The segment at Pro-23–His-44 is disordered. Residues Pro-31 to Asp-40 are compositionally biased toward low complexity. The MPN domain maps to Val-140–Phe-262. Residues His-211, His-213, and Asp-224 each coordinate Zn(2+). The JAMM motif motif lies at His-211–Asp-224.

The protein belongs to the UPF0758 family.

This chain is UPF0758 protein R01728, found in Rhizobium meliloti (strain 1021) (Ensifer meliloti).